The following is a 1009-amino-acid chain: DNA ligase 3 (1009 aa).

The transit peptide at 1–42 directs the protein to the mitochondrion; it reads MSLAFKIFFPQTLRALSRKELCLFRKHHWRDVRQFSQWSETD. The segment at 93 to 185 adopts a PARP-type zinc-finger fold; the sequence is FCVDYAKRGT…QITQHIADLS (93 aa). Positions 105, 108, 139, and 142 each coordinate Zn(2+). 4 positions are modified to phosphoserine: Ser-210, Ser-216, Ser-227, and Ser-242. A disordered region spans residues 224 to 256; sequence RKFSGFSAKPNNSGEAPSSPTPKRSLSSSKCDP. The segment covering 240 to 252 has biased composition (low complexity); that stretch reads PSSPTPKRSLSSS. Interaction with DNA regions lie at residues 277–280, 318–323, 388–391, and 421–427; these read PSYN, VYNLND, TKED, and KMNSGAK. Glu-506 contacts ATP. Catalysis depends on Lys-508, which acts as the N6-AMP-lysine intermediate. ATP is bound by residues Arg-513 and Arg-528. Positions 560 and 655 each coordinate Mg(2+). ATP-binding residues include Lys-660, Arg-671, and Lys-675. The tract at residues 842-917 is disordered; the sequence is AGDEGSSTTG…LATKSSPVKV (76 aa). Low complexity-rich tracts occupy residues 845 to 854 and 863 to 877; these read EGSSTTGGSS and SAVS…SAST. A compositionally biased stretch (polar residues) spans 884–898; sequence LSNSNSKDGNMQTAK. Residue Ser-913 is modified to Phosphoserine. The region spanning 933 to 1009 is the BRCT domain; sequence VLLDIFTGVR…IRKRRLVAPC (77 aa).

This sequence belongs to the ATP-dependent DNA ligase family. As to quaternary structure, isoform 3 interacts (via BRCT domain) with the nuclear DNA-repair protein XRCC1. Interacts with POLG. Interacts with POLB. Mg(2+) serves as cofactor. As to expression, testis, thymus, prostate and heart.

It is found in the mitochondrion. It localises to the nucleus. It carries out the reaction ATP + (deoxyribonucleotide)n-3'-hydroxyl + 5'-phospho-(deoxyribonucleotide)m = (deoxyribonucleotide)n+m + AMP + diphosphate.. Functionally, isoform 3 functions as a heterodimer with DNA-repair protein XRCC1 in the nucleus and can correct defective DNA strand-break repair and sister chromatid exchange following treatment with ionizing radiation and alkylating agents. Isoform 1 is targeted to mitochondria, where it functions as a DNA ligase in mitochondrial base-excision DNA repair. The sequence is that of DNA ligase 3 (LIG3) from Homo sapiens (Human).